The sequence spans 107 residues: Large ribosomal subunit protein uL23 (107 aa).

This sequence belongs to the universal ribosomal protein uL23 family. Part of the 50S ribosomal subunit. Contacts protein L29, and trigger factor when it is bound to the ribosome.

Functionally, one of the early assembly proteins it binds 23S rRNA. One of the proteins that surrounds the polypeptide exit tunnel on the outside of the ribosome. Forms the main docking site for trigger factor binding to the ribosome. This Rhodopirellula baltica (strain DSM 10527 / NCIMB 13988 / SH1) protein is Large ribosomal subunit protein uL23.